The chain runs to 165 residues: Chorismate pyruvate-lyase (165 aa).

Residues methionine 35, arginine 77, leucine 115, and glutamate 156 each contribute to the substrate site.

Belongs to the UbiC family. As to quaternary structure, monomer.

Its subcellular location is the cytoplasm. The catalysed reaction is chorismate = 4-hydroxybenzoate + pyruvate. The protein operates within cofactor biosynthesis; ubiquinone biosynthesis. Functionally, removes the pyruvyl group from chorismate, with concomitant aromatization of the ring, to provide 4-hydroxybenzoate (4HB) for the ubiquinone pathway. This is Chorismate pyruvate-lyase from Shigella dysenteriae serotype 1 (strain Sd197).